A 470-amino-acid polypeptide reads, in one-letter code: Transcriptional activator PmfR (470 aa).

As to quaternary structure, forms oligomers in solution, probably homotetramers.

It participates in alkaloid degradation; nicotine degradation [regulation]. Transcriptional regulator involved in the activation of the purU-mabO-folD-nepA-nepB and mao-ORF55-nbr operons implicated in the nicotine catabolic pathway. The sequence GTTT-14 bp-AAAC seems to be the core binding site of the regulator upstream of the -35 promoter region of the operon. The sequence is that of Transcriptional activator PmfR (pmfR) from Paenarthrobacter nicotinovorans (Arthrobacter nicotinovorans).